We begin with the raw amino-acid sequence, 695 residues long: DUF724 domain-containing protein 3 (695 aa).

Positions 376–464 are disordered; that stretch reads ITVTPLKQQD…GTSDTIRVDD (89 aa). Over residues 384-402 the composition is skewed to basic and acidic residues; the sequence is QDAETEGKKSPKKTPEPVK. Residues 434–459 are compositionally biased toward polar residues; the sequence is NQNSNLNETDETCNVSKAGVNGTSDT. Residues 509–694 form the DUF724 domain; sequence PFTKNLPFWK…LEFITSVLAP (186 aa). A coiled-coil region spans residues 614-684; that stretch reads VEERKCLEKR…TIDQEIANVE (71 aa).

In terms of assembly, homodimer.

In terms of biological role, may be involved in the polar growth of plant cells via transportation of RNAs. The protein is DUF724 domain-containing protein 3 of Arabidopsis thaliana (Mouse-ear cress).